A 264-amino-acid polypeptide reads, in one-letter code: Cysteine-rich repeat secretory protein 26 (264 aa).

An N-terminal signal peptide occupies residues 1–27; that stretch reads MSSNIFGSVPILVVVAIQLLLVHNVSS. 2 consecutive Gnk2-homologous domains span residues 34–142 and 148–261; these read YLNH…SVDS and YKRM…LYPF.

This sequence belongs to the cysteine-rich repeat secretory protein family.

The protein resides in the secreted. The sequence is that of Cysteine-rich repeat secretory protein 26 (CRRSP26) from Arabidopsis thaliana (Mouse-ear cress).